A 127-amino-acid chain; its full sequence is Aspartate 1-decarboxylase (127 aa).

The Schiff-base intermediate with substrate; via pyruvic acid role is filled by serine 25. A Pyruvic acid (Ser) modification is found at serine 25. Substrate is bound at residue threonine 57. Tyrosine 58 functions as the Proton donor in the catalytic mechanism. Residue 73–75 (GAA) coordinates substrate.

It belongs to the PanD family. As to quaternary structure, heterooctamer of four alpha and four beta subunits. Pyruvate is required as a cofactor. In terms of processing, is synthesized initially as an inactive proenzyme, which is activated by self-cleavage at a specific serine bond to produce a beta-subunit with a hydroxyl group at its C-terminus and an alpha-subunit with a pyruvoyl group at its N-terminus.

The protein resides in the cytoplasm. It carries out the reaction L-aspartate + H(+) = beta-alanine + CO2. The protein operates within cofactor biosynthesis; (R)-pantothenate biosynthesis; beta-alanine from L-aspartate: step 1/1. In terms of biological role, catalyzes the pyruvoyl-dependent decarboxylation of aspartate to produce beta-alanine. In Neisseria meningitidis serogroup C / serotype 2a (strain ATCC 700532 / DSM 15464 / FAM18), this protein is Aspartate 1-decarboxylase.